A 311-amino-acid chain; its full sequence is Malate dehydrogenase (311 aa).

NAD(+)-binding positions include Gly-7 to Gly-13 and Asp-34. Substrate-binding residues include Arg-81 and Arg-87. NAD(+) contacts are provided by residues Asn-94 and Ile-117–Asn-119. Positions 119 and 153 each coordinate substrate. His-177 functions as the Proton acceptor in the catalytic mechanism. Met-227 is a binding site for NAD(+).

Belongs to the LDH/MDH superfamily. MDH type 1 family. Homodimer.

The enzyme catalyses (S)-malate + NAD(+) = oxaloacetate + NADH + H(+). In terms of biological role, catalyzes the reversible oxidation of malate to oxaloacetate. This chain is Malate dehydrogenase, found in Shewanella baltica (strain OS223).